We begin with the raw amino-acid sequence, 343 residues long: L-threonine 3-dehydrogenase (343 aa).

Cys-38 contributes to the Zn(2+) binding site. Active-site charge relay system residues include Thr-40 and His-43. 6 residues coordinate Zn(2+): His-63, Glu-64, Cys-93, Cys-96, Cys-99, and Cys-107. Residues Ile-175, Asp-195, Arg-200, 262–264, and 286–287 contribute to the NAD(+) site; these read LGI and IY.

It belongs to the zinc-containing alcohol dehydrogenase family. Homotetramer. The cofactor is Zn(2+).

It localises to the cytoplasm. It carries out the reaction L-threonine + NAD(+) = (2S)-2-amino-3-oxobutanoate + NADH + H(+). It functions in the pathway amino-acid degradation; L-threonine degradation via oxydo-reductase pathway; glycine from L-threonine: step 1/2. In terms of biological role, catalyzes the NAD(+)-dependent oxidation of L-threonine to 2-amino-3-ketobutyrate. This Paraburkholderia phytofirmans (strain DSM 17436 / LMG 22146 / PsJN) (Burkholderia phytofirmans) protein is L-threonine 3-dehydrogenase.